Reading from the N-terminus, the 185-residue chain is Ribosome maturation factor RimP (185 aa).

It belongs to the RimP family.

It is found in the cytoplasm. Its function is as follows. Required for maturation of 30S ribosomal subunits. The polypeptide is Ribosome maturation factor RimP (Magnetococcus marinus (strain ATCC BAA-1437 / JCM 17883 / MC-1)).